The primary structure comprises 174 residues: NADH-quinone oxidoreductase subunit B (174 aa).

4 residues coordinate [4Fe-4S] cluster: C53, C54, C118, and C148.

This sequence belongs to the complex I 20 kDa subunit family. As to quaternary structure, NDH-1 is composed of 14 different subunits. Subunits NuoB, C, D, E, F, and G constitute the peripheral sector of the complex. The cofactor is [4Fe-4S] cluster.

Its subcellular location is the cell inner membrane. The catalysed reaction is a quinone + NADH + 5 H(+)(in) = a quinol + NAD(+) + 4 H(+)(out). Functionally, NDH-1 shuttles electrons from NADH, via FMN and iron-sulfur (Fe-S) centers, to quinones in the respiratory chain. Couples the redox reaction to proton translocation (for every two electrons transferred, four hydrogen ions are translocated across the cytoplasmic membrane), and thus conserves the redox energy in a proton gradient. In Ruegeria sp. (strain TM1040) (Silicibacter sp.), this protein is NADH-quinone oxidoreductase subunit B.